We begin with the raw amino-acid sequence, 333 residues long: Glycerol-3-phosphate dehydrogenase [NAD(P)+] (333 aa).

Positions 10, 11, and 105 each coordinate NADPH. 3 residues coordinate sn-glycerol 3-phosphate: K105, G136, and T138. A140 provides a ligand contact to NADPH. Residues K191, D244, S254, R255, and N256 each coordinate sn-glycerol 3-phosphate. K191 acts as the Proton acceptor in catalysis. Residue R255 coordinates NADPH. V279 and E281 together coordinate NADPH.

Belongs to the NAD-dependent glycerol-3-phosphate dehydrogenase family.

The protein resides in the cytoplasm. It carries out the reaction sn-glycerol 3-phosphate + NAD(+) = dihydroxyacetone phosphate + NADH + H(+). The catalysed reaction is sn-glycerol 3-phosphate + NADP(+) = dihydroxyacetone phosphate + NADPH + H(+). It participates in membrane lipid metabolism; glycerophospholipid metabolism. Functionally, catalyzes the reduction of the glycolytic intermediate dihydroxyacetone phosphate (DHAP) to sn-glycerol 3-phosphate (G3P), the key precursor for phospholipid synthesis. The sequence is that of Glycerol-3-phosphate dehydrogenase [NAD(P)+] from Syntrophotalea carbinolica (strain DSM 2380 / NBRC 103641 / GraBd1) (Pelobacter carbinolicus).